Reading from the N-terminus, the 85-residue chain is Large ribosomal subunit protein bL27 (85 aa).

Positions 1–21 (MAHKKGASSSRNGRDSNAQRL) are disordered. Polar residues predominate over residues 7-19 (ASSSRNGRDSNAQ).

Belongs to the bacterial ribosomal protein bL27 family.

The protein is Large ribosomal subunit protein bL27 of Beutenbergia cavernae (strain ATCC BAA-8 / DSM 12333 / CCUG 43141 / JCM 11478 / NBRC 16432 / NCIMB 13614 / HKI 0122).